The chain runs to 122 residues: Large ribosomal subunit protein uL14 (122 aa).

The protein belongs to the universal ribosomal protein uL14 family. In terms of assembly, part of the 50S ribosomal subunit. Forms a cluster with proteins L3 and L19. In the 70S ribosome, L14 and L19 interact and together make contacts with the 16S rRNA in bridges B5 and B8.

In terms of biological role, binds to 23S rRNA. Forms part of two intersubunit bridges in the 70S ribosome. The sequence is that of Large ribosomal subunit protein uL14 from Idiomarina loihiensis (strain ATCC BAA-735 / DSM 15497 / L2-TR).